The following is a 191-amino-acid chain: Holliday junction branch migration complex subunit RuvA (191 aa).

A domain I region spans residues 1-64 (MIGKLTGTLL…EDAQLLYGFA (64 aa)). The segment at 65–140 (TAPERQAFRA…KLGADLGASH (76 aa)) is domain II. Positions 140-142 (HGP) are flexible linker. The interval 143–191 (AVSGAQADILQALLALGYNDKEAAAALKALPAQVEVSDGIKWALKALTK) is domain III.

Belongs to the RuvA family. In terms of assembly, homotetramer. Forms an RuvA(8)-RuvB(12)-Holliday junction (HJ) complex. HJ DNA is sandwiched between 2 RuvA tetramers; dsDNA enters through RuvA and exits via RuvB. An RuvB hexamer assembles on each DNA strand where it exits the tetramer. Each RuvB hexamer is contacted by two RuvA subunits (via domain III) on 2 adjacent RuvB subunits; this complex drives branch migration. In the full resolvosome a probable DNA-RuvA(4)-RuvB(12)-RuvC(2) complex forms which resolves the HJ.

The protein localises to the cytoplasm. Its function is as follows. The RuvA-RuvB-RuvC complex processes Holliday junction (HJ) DNA during genetic recombination and DNA repair, while the RuvA-RuvB complex plays an important role in the rescue of blocked DNA replication forks via replication fork reversal (RFR). RuvA specifically binds to HJ cruciform DNA, conferring on it an open structure. The RuvB hexamer acts as an ATP-dependent pump, pulling dsDNA into and through the RuvAB complex. HJ branch migration allows RuvC to scan DNA until it finds its consensus sequence, where it cleaves and resolves the cruciform DNA. In Verminephrobacter eiseniae (strain EF01-2), this protein is Holliday junction branch migration complex subunit RuvA.